A 231-amino-acid polypeptide reads, in one-letter code: Potassium/proton antiporter CemA (231 aa).

The next 3 helical transmembrane spans lie at 9–29 (FIPL…SFLF), 116–136 (IICF…LIIL), and 191–211 (IISG…KYWI).

Belongs to the CemA family.

Its subcellular location is the plastid. The protein resides in the chloroplast inner membrane. The enzyme catalyses K(+)(in) + H(+)(out) = K(+)(out) + H(+)(in). Functionally, contributes to K(+)/H(+) antiport activity by supporting proton efflux to control proton extrusion and homeostasis in chloroplasts in a light-dependent manner to modulate photosynthesis. Prevents excessive induction of non-photochemical quenching (NPQ) under continuous-light conditions. Indirectly promotes efficient inorganic carbon uptake into chloroplasts. The protein is Potassium/proton antiporter CemA of Manihot esculenta (Cassava).